The following is a 443-amino-acid chain: Amino-acid acetyltransferase (443 aa).

Positions glutamate 296–lysine 436 constitute an N-acetyltransferase domain.

This sequence belongs to the acetyltransferase family. ArgA subfamily. As to quaternary structure, homohexamer.

It localises to the cytoplasm. It carries out the reaction L-glutamate + acetyl-CoA = N-acetyl-L-glutamate + CoA + H(+). Its pathway is amino-acid biosynthesis; L-arginine biosynthesis; N(2)-acetyl-L-ornithine from L-glutamate: step 1/4. The sequence is that of Amino-acid acetyltransferase from Salmonella arizonae (strain ATCC BAA-731 / CDC346-86 / RSK2980).